A 391-amino-acid chain; its full sequence is MASSLLTTPSQTLAPNPAAARARRSSPAAAQVSFSSPLLPGRRALRCARPVAIEKEVPEKEAPTTFLREDGSGAGSGSVRERFEGMIRRVQGEICAALEEADGSGKRFVEDVWSRPGGVCVHSRVLQDGNVFEKAGVNVSAVIGVCPRSAYRAAKGAAKNGAADGHKAGPVPFFSAGISSVLHPKNPFAPTLHFNYRYFETDAPKDVPGAPRSWWFGGGTDLTPSYLIEEDVKHFHSVQKQTCDKFDPSFYPRFKKWCDDYFYIKHRNERRGLGGIFFDDLNDYDQDMLLNFATECAGSVIPAYIPIIERRKDTPFNEEQKAWQQVRRGRYVEFNLVYDRGTTFGLKTGGRIESILVSLPLTARWEYDHKPEEGSEEWKLLDACINPKEWL.

Positions 1-13 (MASSLLTTPSQTL) are enriched in polar residues. The tract at residues 1–34 (MASSLLTTPSQTLAPNPAAARARRSSPAAAQVSF) is disordered. The span at 14 to 30 (APNPAAARARRSSPAAA) shows a compositional bias: low complexity. An important for dimerization region spans residues 125-134 (VLQDGNVFEK). Serine 179 lines the substrate pocket. Histidine 193 (proton donor) is an active-site residue. Residues 195–197 (NYR) and 349–354 (GGRIES) each bind substrate. Residues 331–366 (YVEFNLVYDRGTTFGLKTGGRIESILVSLPLTARWE) form an important for dimerization region.

This sequence belongs to the aerobic coproporphyrinogen-III oxidase family. Homodimer.

The protein localises to the plastid. It localises to the chloroplast. The catalysed reaction is coproporphyrinogen III + O2 + 2 H(+) = protoporphyrinogen IX + 2 CO2 + 2 H2O. Its pathway is porphyrin-containing compound metabolism; protoporphyrin-IX biosynthesis; protoporphyrinogen-IX from coproporphyrinogen-III (O2 route): step 1/1. Its function is as follows. Involved in the heme and chlorophyll biosynthesis. Catalyzes the aerobic oxidative decarboxylation of propionate groups of rings A and B of coproporphyrinogen-III to yield the vinyl groups in protoporphyrinogen-IX. The chain is Oxygen-dependent coproporphyrinogen-III oxidase, chloroplastic (CPX) from Hordeum vulgare (Barley).